Consider the following 278-residue polypeptide: uncharacterized protein (278 aa).

Residues 1–34 lie on the Cytoplasmic side of the membrane; sequence MAKTIKVIRKKDPKKKNLSDPLAKQKLVWKIGHV. Residues 35–55 form a helical membrane-spanning segment; that stretch reads LTLVFGLLFSITYFYHVLIFF. At 56–129 the chain is on the extracellular side; sequence KYRSWKWLFL…DLLSSENFHT (74 aa). The helical transmembrane segment at 130-150 threads the bilayer; the sequence is LLIACLWFFGGGKSFYKILPY. Over 151–180 the chain is Cytoplasmic; that stretch reads MILSYLHLTKMNYELNANKEEKIPLTPKDR. Residues 181–201 form a helical membrane-spanning segment; the sequence is KMLHLLAYSELLVILALTLDT. At 202–205 the chain is on the extracellular side; that stretch reads ILFK. The helical transmembrane segment at 206 to 222 threads the bilayer; the sequence is TGTSGFMLVIYVGIYWL. Topologically, residues 223 to 278 are cytoplasmic; that stretch reads RLNFSPYAQVAVLELLVKFEKYVPKKYRDKWQVIKNFIYMKMKEHEKRTEEVARYA.

The protein localises to the cell membrane. This is an uncharacterized protein from Saccharomyces cerevisiae (strain ATCC 204508 / S288c) (Baker's yeast).